The following is a 231-amino-acid chain: Cytochrome c oxidase subunit 2 (231 aa).

At M1–S14 the chain is on the mitochondrial intermembrane side. The helical transmembrane segment at P15 to M45 threads the bilayer. Over M46–Q59 the chain is Mitochondrial matrix. The chain crosses the membrane as a helical span at residues E60–I87. Residues D88 to X231 lie on the Mitochondrial intermembrane side of the membrane. Cu cation-binding residues include H161, C196, E198, C200, H204, and M207. Residue E198 coordinates Mg(2+).

The protein belongs to the cytochrome c oxidase subunit 2 family. In terms of assembly, component of the cytochrome c oxidase (complex IV, CIV), a multisubunit enzyme composed of 14 subunits. The complex is composed of a catalytic core of 3 subunits MT-CO1, MT-CO2 and MT-CO3, encoded in the mitochondrial DNA, and 11 supernumerary subunits COX4I, COX5A, COX5B, COX6A, COX6B, COX6C, COX7A, COX7B, COX7C, COX8 and NDUFA4, which are encoded in the nuclear genome. The complex exists as a monomer or a dimer and forms supercomplexes (SCs) in the inner mitochondrial membrane with NADH-ubiquinone oxidoreductase (complex I, CI) and ubiquinol-cytochrome c oxidoreductase (cytochrome b-c1 complex, complex III, CIII), resulting in different assemblies (supercomplex SCI(1)III(2)IV(1) and megacomplex MCI(2)III(2)IV(2)). Found in a complex with TMEM177, COA6, COX18, COX20, SCO1 and SCO2. Interacts with TMEM177 in a COX20-dependent manner. Interacts with COX20. Interacts with COX16. Requires Cu cation as cofactor.

Its subcellular location is the mitochondrion inner membrane. It catalyses the reaction 4 Fe(II)-[cytochrome c] + O2 + 8 H(+)(in) = 4 Fe(III)-[cytochrome c] + 2 H2O + 4 H(+)(out). Functionally, component of the cytochrome c oxidase, the last enzyme in the mitochondrial electron transport chain which drives oxidative phosphorylation. The respiratory chain contains 3 multisubunit complexes succinate dehydrogenase (complex II, CII), ubiquinol-cytochrome c oxidoreductase (cytochrome b-c1 complex, complex III, CIII) and cytochrome c oxidase (complex IV, CIV), that cooperate to transfer electrons derived from NADH and succinate to molecular oxygen, creating an electrochemical gradient over the inner membrane that drives transmembrane transport and the ATP synthase. Cytochrome c oxidase is the component of the respiratory chain that catalyzes the reduction of oxygen to water. Electrons originating from reduced cytochrome c in the intermembrane space (IMS) are transferred via the dinuclear copper A center (CU(A)) of subunit 2 and heme A of subunit 1 to the active site in subunit 1, a binuclear center (BNC) formed by heme A3 and copper B (CU(B)). The BNC reduces molecular oxygen to 2 water molecules using 4 electrons from cytochrome c in the IMS and 4 protons from the mitochondrial matrix. The protein is Cytochrome c oxidase subunit 2 (MT-CO2) of Latimeria chalumnae (Coelacanth).